The chain runs to 20 residues: 35 kDa cell wall protein (20 aa).

The protein localises to the secreted. The protein resides in the cell wall. The sequence is that of 35 kDa cell wall protein from Phaseolus vulgaris (Kidney bean).